Consider the following 324-residue polypeptide: Porphobilinogen deaminase (324 aa).

Cys246 carries the post-translational modification S-(dipyrrolylmethanemethyl)cysteine. Positions 261 to 279 (GQAPEEGGRAAASQAPAAL) are insert.

Belongs to the HMBS family. Monomer. Requires dipyrromethane as cofactor.

It carries out the reaction 4 porphobilinogen + H2O = hydroxymethylbilane + 4 NH4(+). It participates in porphyrin-containing compound metabolism; protoporphyrin-IX biosynthesis; coproporphyrinogen-III from 5-aminolevulinate: step 2/4. Tetrapolymerization of the monopyrrole PBG into the hydroxymethylbilane pre-uroporphyrinogen in several discrete steps. This Paenibacillus macerans (Bacillus macerans) protein is Porphobilinogen deaminase (hemC).